The primary structure comprises 393 residues: Chorismate synthase (393 aa).

NADP(+) contacts are provided by R40 and R46. FMN contacts are provided by residues 129 to 131, 249 to 250, G301, 316 to 320, and R342; these read RSS, QA, and KPIPT.

Belongs to the chorismate synthase family. In terms of assembly, homotetramer. FMNH2 serves as cofactor.

It catalyses the reaction 5-O-(1-carboxyvinyl)-3-phosphoshikimate = chorismate + phosphate. It participates in metabolic intermediate biosynthesis; chorismate biosynthesis; chorismate from D-erythrose 4-phosphate and phosphoenolpyruvate: step 7/7. Catalyzes the anti-1,4-elimination of the C-3 phosphate and the C-6 proR hydrogen from 5-enolpyruvylshikimate-3-phosphate (EPSP) to yield chorismate, which is the branch point compound that serves as the starting substrate for the three terminal pathways of aromatic amino acid biosynthesis. This reaction introduces a second double bond into the aromatic ring system. The chain is Chorismate synthase from Geotalea uraniireducens (strain Rf4) (Geobacter uraniireducens).